A 185-amino-acid chain; its full sequence is Threonylcarbamoyl-AMP synthase (185 aa).

The YrdC-like domain occupies 4-185 (SWRVQQAARE…LATGEVVRPG (182 aa)).

The protein belongs to the SUA5 family. TsaC subfamily.

The protein resides in the cytoplasm. It carries out the reaction L-threonine + hydrogencarbonate + ATP = L-threonylcarbamoyladenylate + diphosphate + H2O. In terms of biological role, required for the formation of a threonylcarbamoyl group on adenosine at position 37 (t(6)A37) in tRNAs that read codons beginning with adenine. Catalyzes the conversion of L-threonine, HCO(3)(-)/CO(2) and ATP to give threonylcarbamoyl-AMP (TC-AMP) as the acyladenylate intermediate, with the release of diphosphate. In Pseudomonas entomophila (strain L48), this protein is Threonylcarbamoyl-AMP synthase.